The sequence spans 1073 residues: DNA-directed RNA polymerase subunit beta (1073 aa).

This sequence belongs to the RNA polymerase beta chain family. As to quaternary structure, in plastids the minimal PEP RNA polymerase catalytic core is composed of four subunits: alpha, beta, beta', and beta''. When a (nuclear-encoded) sigma factor is associated with the core the holoenzyme is formed, which can initiate transcription.

It localises to the plastid. The protein resides in the chloroplast. The catalysed reaction is RNA(n) + a ribonucleoside 5'-triphosphate = RNA(n+1) + diphosphate. DNA-dependent RNA polymerase catalyzes the transcription of DNA into RNA using the four ribonucleoside triphosphates as substrates. The chain is DNA-directed RNA polymerase subunit beta from Aethionema grandiflorum (Persian stone-cress).